Reading from the N-terminus, the 391-residue chain is Dual-specificity RNA methyltransferase RlmN (391 aa).

E115 (proton acceptor) is an active-site residue. The Radical SAM core domain maps to 121–363; that stretch reads EENRGTLCIS…SPIRTPRGED (243 aa). Residues C128 and C368 are joined by a disulfide bond. 3 residues coordinate [4Fe-4S] cluster: C135, C139, and C142. Residues 194–195, S226, 248–250, and N325 contribute to the S-adenosyl-L-methionine site; these read GE and SFH. The active-site S-methylcysteine intermediate is C368.

The protein belongs to the radical SAM superfamily. RlmN family. [4Fe-4S] cluster is required as a cofactor.

It is found in the cytoplasm. It catalyses the reaction adenosine(2503) in 23S rRNA + 2 reduced [2Fe-2S]-[ferredoxin] + 2 S-adenosyl-L-methionine = 2-methyladenosine(2503) in 23S rRNA + 5'-deoxyadenosine + L-methionine + 2 oxidized [2Fe-2S]-[ferredoxin] + S-adenosyl-L-homocysteine. The enzyme catalyses adenosine(37) in tRNA + 2 reduced [2Fe-2S]-[ferredoxin] + 2 S-adenosyl-L-methionine = 2-methyladenosine(37) in tRNA + 5'-deoxyadenosine + L-methionine + 2 oxidized [2Fe-2S]-[ferredoxin] + S-adenosyl-L-homocysteine. Functionally, specifically methylates position 2 of adenine 2503 in 23S rRNA and position 2 of adenine 37 in tRNAs. m2A2503 modification seems to play a crucial role in the proofreading step occurring at the peptidyl transferase center and thus would serve to optimize ribosomal fidelity. This chain is Dual-specificity RNA methyltransferase RlmN, found in Paracoccus denitrificans (strain Pd 1222).